The primary structure comprises 349 residues: Inositol-tetrakisphosphate 1-kinase 2 (349 aa).

1D-myo-inositol 1,3,4-trisphosphate-binding residues include lysine 48 and lysine 90. Positions 125 and 175 each coordinate ATP. The 1D-myo-inositol 1,3,4-trisphosphate site is built by histidine 186 and lysine 218. ATP-binding positions include 207-218 and serine 233; that span reads QEFVNHGGILFK. The Mg(2+) site is built by aspartate 298, aspartate 313, and asparagine 315. Position 315 (asparagine 315) interacts with 1D-myo-inositol 1,3,4-trisphosphate.

This sequence belongs to the ITPK1 family. As to quaternary structure, monomer. Mg(2+) is required as a cofactor.

It carries out the reaction 1D-myo-inositol 3,4,5,6-tetrakisphosphate + ATP = 1D-myo-inositol 1,3,4,5,6-pentakisphosphate + ADP + H(+). The enzyme catalyses 1D-myo-inositol 1,3,4-trisphosphate + ATP = 1D-myo-inositol 1,3,4,5-tetrakisphosphate + ADP + H(+). The catalysed reaction is 1D-myo-inositol 1,3,4-trisphosphate + ATP = 1D-myo-inositol 1,3,4,6-tetrakisphosphate + ADP + H(+). Kinase that can phosphorylate various inositol polyphosphate such as Ins(3,4,5,6)P4 or Ins(1,3,4)P3 and participates in phytic acid biosynthesis in developing seeds. Phytic acid is the primary storage form of phosphorus in cereal grains and other plant seeds. In Oryza sativa subsp. indica (Rice), this protein is Inositol-tetrakisphosphate 1-kinase 2 (ITPK2).